The chain runs to 89 residues: uncharacterized protein (89 aa).

A signal peptide spans 1–19 (MQLTKTQFVRCVFLLLANS).

This is an uncharacterized protein from Sulfolobus islandicus filamentous virus (isolate Iceland/Hveragerdi) (SIFV).